The primary structure comprises 82 residues: Cytotoxin 10 (82 aa).

The signal sequence occupies residues 1-22; it reads MKTLLLTLVVVVTIVCLDLGYT. 4 disulfide bridges follow: Cys25/Cys43, Cys36/Cys60, Cys64/Cys75, and Cys76/Cys81.

This sequence belongs to the three-finger toxin family. Short-chain subfamily. Type IA cytotoxin sub-subfamily. In terms of assembly, monomer in solution; Homodimer and oligomer in the presence of negatively charged lipids forming a pore with a size ranging between 20 and 30 Angstroms. As to expression, expressed by the venom gland.

Its subcellular location is the secreted. It is found in the target cell membrane. In terms of biological role, shows cytolytic activity on many different cells by forming pore in lipid membranes. In vivo, increases heart rate or kills the animal by cardiac arrest. In addition, it binds to heparin with high affinity, interacts with Kv channel-interacting protein 1 (KCNIP1) in a calcium-independent manner, and binds to integrin alpha-V/beta-3 (ITGAV/ITGB3) with moderate affinity. This Naja atra (Chinese cobra) protein is Cytotoxin 10.